Consider the following 185-residue polypeptide: MINEIKKSAEQKMQKTLEAFKNDLAKVRTGRAHTGILDHVMVDYYGSDVPVNQVANVTLIDARTIGVQPWEKPMLAKIEKAIRDSDLGLNPASMGEIIRVPMPMLTEERRKDLIKVVRGEAEGARVAVRNIRRDSNTEFKNLLKDKAITEDDERRGQDEIQKLTDKYTAEIDKMLATKEADLLAV.

It belongs to the RRF family.

The protein localises to the cytoplasm. In terms of biological role, responsible for the release of ribosomes from messenger RNA at the termination of protein biosynthesis. May increase the efficiency of translation by recycling ribosomes from one round of translation to another. In Chromobacterium violaceum (strain ATCC 12472 / DSM 30191 / JCM 1249 / CCUG 213 / NBRC 12614 / NCIMB 9131 / NCTC 9757 / MK), this protein is Ribosome-recycling factor.